The following is a 313-amino-acid chain: Guanine nucleotide-binding protein-like 3-like protein (313 aa).

Positions 1–14 are enriched in basic residues; that stretch reads MGIKKKRQSKRLTT. The disordered stretch occupies residues 1 to 41; sequence MGIKKKRQSKRLTTRKREGMLKRARANERKKRRMDRKMQAK. Residues 15–27 are compositionally biased toward basic and acidic residues; it reads RKREGMLKRARAN. Residues 95–98, 178–185, and 212–215 contribute to the GTP site; these read SKSD, GNPGSGKN, and TLSS.

It belongs to the MMR1/HSR1 GTP-binding protein family.

It is found in the nucleus. Its subcellular location is the nucleolus. In terms of biological role, required for normal processing of ribosomal pre-rRNA. Required for cell proliferation. Binds GTP. The chain is Guanine nucleotide-binding protein-like 3-like protein from Encephalitozoon cuniculi (strain GB-M1) (Microsporidian parasite).